The primary structure comprises 669 residues: MSDTASSPFIDRPRSMLDEDSEFNSRQLISNLQFQISSLKTEKSLLQQNKESMAEKYEALLITKNEEVVSLQNDFDYVFKQRDELQSKYDNSQQINGKTVESLQVQLKDITERYDELKEEHEYLNSDFKKFCRDNNQVKSDLEFHINSKDQMNEKITSLQDENKSLCKTNDELIEKLNSISEQLVSNTQDKFSRNLQEQNSKLQRTNNQLQLKVDSLLQHRTSVELLRQKNITLTNKLSSLANLEEKCCKLEIENLELSNKFDTFFKTIEDSVNDDTSRTNESVVIEFMNKYKRLQNLNLVLQDKYNQSVTGVKNMQTELSNMQQKYSEAISKVESLNETVSTKTEFIDKLERQKLLNVKEIEYLRDSLKKLEELNLKRSKEETNDKSTEQYMTNLEKLVDEYRTEINTLQKQMSSQEIQSNVQSGSKRPRIIDNGIQNDFKSQVSVLEKENLKLLSTIKNLEYNNKTLGEKLQNLESLDNKKKELHILQLKSNPASQDQLIKQQTLDLLSKENQEMIETFVKNKSAHDMIPKSLFERQENDKLQLQTKIDQLNKRISRLRDIYSQKSRDILSVISKFFGYTIEFLPSPINSNDLSSRIKLVSKYMNNKDESNSAYLILDVNSKSLKANGSLEFKTLCEDLVTNWIREKDQIPCFLSALNLSIYDKYVS.

3 coiled-coil regions span residues 24–225 (NSRQ…TSVE), 302–487 (LQDK…KELH), and 533–573 (KSLF…DILS).

This sequence belongs to the MAD1 family.

It localises to the nucleus. Central component of the spindle assembly checkpoint. The chain is Spindle assembly checkpoint component MAD1 (MAD1) from Debaryomyces hansenii (strain ATCC 36239 / CBS 767 / BCRC 21394 / JCM 1990 / NBRC 0083 / IGC 2968) (Yeast).